The chain runs to 360 residues: MLVWLAEHLVKYYSGFNVFSYLTFRAIVSLLTALFISLWMGPRMIARLQKLSFGQVVRNDGPESHFSKRGTPTMGGIMILTAIVISVLLWAYPSNPYVWCVLVVLIGYGIIGFVDDYHKVVRKDTKGLIARWKYFWMSVIALGVAFALYLVGKDTPATQLVVPFFKDVMPQLGLFYILLSYFVIVGTGNAVNLTDGLDGLAIMPTVFVAAGFALVAWATGNMNFANYLHIPYLRYAGELVIVCTAIVGAGLGFLWFNTYPAQVFMGDVGSLALGGALGIIAVLLRQEFLLVIMGGVFVVETLSVILQVGSFKLRGQRIFRMAPIHHHYELKGWPEPRVIVRFWIISLMLVLIGLATLKVR.

Topologically, residues 1 to 25 are periplasmic; that stretch reads MLVWLAEHLVKYYSGFNVFSYLTFR. The helical transmembrane segment at 26–46 threads the bilayer; that stretch reads AIVSLLTALFISLWMGPRMIA. Over 47 to 71 the chain is Cytoplasmic; that stretch reads RLQKLSFGQVVRNDGPESHFSKRGT. A helical transmembrane segment spans residues 72-92; it reads PTMGGIMILTAIVISVLLWAY. A topological domain (periplasmic) is located at residue proline 93. Residues 94–114 form a helical membrane-spanning segment; that stretch reads SNPYVWCVLVVLIGYGIIGFV. Over 115–131 the chain is Cytoplasmic; that stretch reads DDYHKVVRKDTKGLIAR. A helical membrane pass occupies residues 132–152; sequence WKYFWMSVIALGVAFALYLVG. Residues 153–167 are Periplasmic-facing; that stretch reads KDTPATQLVVPFFKD. A helical transmembrane segment spans residues 168–188; the sequence is VMPQLGLFYILLSYFVIVGTG. The Cytoplasmic segment spans residues 189–198; that stretch reads NAVNLTDGLD. A helical transmembrane segment spans residues 199–219; sequence GLAIMPTVFVAAGFALVAWAT. At 220-235 the chain is on the periplasmic side; sequence GNMNFANYLHIPYLRY. Residues 236–256 traverse the membrane as a helical segment; the sequence is AGELVIVCTAIVGAGLGFLWF. At 257-262 the chain is on the cytoplasmic side; that stretch reads NTYPAQ. A helical transmembrane segment spans residues 263-283; that stretch reads VFMGDVGSLALGGALGIIAVL. At 284–287 the chain is on the periplasmic side; the sequence is LRQE. A helical transmembrane segment spans residues 288–308; sequence FLLVIMGGVFVVETLSVILQV. The Cytoplasmic segment spans residues 309-337; the sequence is GSFKLRGQRIFRMAPIHHHYELKGWPEPR. A helical membrane pass occupies residues 338 to 358; the sequence is VIVRFWIISLMLVLIGLATLK. At 359–360 the chain is on the periplasmic side; sequence VR.

The protein belongs to the glycosyltransferase 4 family. MraY subfamily. Requires Mg(2+) as cofactor.

Its subcellular location is the cell inner membrane. The catalysed reaction is UDP-N-acetyl-alpha-D-muramoyl-L-alanyl-gamma-D-glutamyl-meso-2,6-diaminopimeloyl-D-alanyl-D-alanine + di-trans,octa-cis-undecaprenyl phosphate = di-trans,octa-cis-undecaprenyl diphospho-N-acetyl-alpha-D-muramoyl-L-alanyl-D-glutamyl-meso-2,6-diaminopimeloyl-D-alanyl-D-alanine + UMP. It functions in the pathway cell wall biogenesis; peptidoglycan biosynthesis. Functionally, catalyzes the initial step of the lipid cycle reactions in the biosynthesis of the cell wall peptidoglycan: transfers peptidoglycan precursor phospho-MurNAc-pentapeptide from UDP-MurNAc-pentapeptide onto the lipid carrier undecaprenyl phosphate, yielding undecaprenyl-pyrophosphoryl-MurNAc-pentapeptide, known as lipid I. This Salmonella paratyphi A (strain ATCC 9150 / SARB42) protein is Phospho-N-acetylmuramoyl-pentapeptide-transferase.